The primary structure comprises 389 residues: Putative 8-amino-7-oxononanoate synthase (389 aa).

Arg22 is a substrate binding site. Residue Gly109–Tyr110 coordinates pyridoxal 5'-phosphate. His134 provides a ligand contact to substrate. Residues Ser182, Asp207–His210, and Thr238–Lys241 each bind pyridoxal 5'-phosphate. An N6-(pyridoxal phosphate)lysine modification is found at Lys241. Residue Thr350 participates in substrate binding.

This sequence belongs to the class-II pyridoxal-phosphate-dependent aminotransferase family. BioF subfamily. Homodimer. Requires pyridoxal 5'-phosphate as cofactor.

It carries out the reaction 6-carboxyhexanoyl-[ACP] + L-alanine + H(+) = (8S)-8-amino-7-oxononanoate + holo-[ACP] + CO2. It participates in cofactor biosynthesis; biotin biosynthesis. Functionally, catalyzes the decarboxylative condensation of pimeloyl-[acyl-carrier protein] and L-alanine to produce 8-amino-7-oxononanoate (AON), [acyl-carrier protein], and carbon dioxide. This is Putative 8-amino-7-oxononanoate synthase (bioF) from Parvibaculum lavamentivorans (strain DS-1 / DSM 13023 / NCIMB 13966).